We begin with the raw amino-acid sequence, 208 residues long: Protein Nef (208 aa).

Positions 1 to 33 (MGGKWSKRMSGWSAVRERMKRAEPAEPAADGVG) are disordered. Gly-2 is lipidated: N-myristoyl glycine; by host. Ser-6 bears the Phosphoserine; by host mark. Residues 15–24 (VRERMKRAEP) are compositionally biased toward basic and acidic residues. The segment at 64 to 67 (EDED) is acidic; interacts with host PACS1 and PACS2; stabilizes the interaction of NEF/MHC-I with host AP1M1; necessary for MHC-I internalization. The tract at residues 71–80 (PVRPQVPLRP) is SH3-binding; interaction with Src family tyrosine kinases. Positions 74-77 (PQVP) match the PxxP; stabilizes the interaction of NEF/MHC-I with host AP1M1; necessary for MHC-I internalization motif. The segment at 110–126 (DILDLWIHHTQGYFPDW) is mediates dimerization, Nef-PTE1 interaction. Positions 150-182 (VDPDYVEEANAGENNSLLHPMSQHGMDDPEKEV) are binding to ATP6V1H. The Dileucine internalization motif; necessary for CD4 internalization motif lies at 166–167 (LL). A Diacidic; necessary for CD4 internalization motif is present at residues 176 to 177 (DD).

This sequence belongs to the lentivirus primate group Nef protein family. As to quaternary structure, monomer; cytosolic form. Homodimer; membrane bound form. Interacts with Nef associated p21-activated kinase (PAK2); this interaction activates PAK2. Associates with the Nef-MHC-I-AP1 complex; this complex is required for MHC-I internalization. Interacts (via C-terminus) with host PI3-kinase. Interacts with host PACS1; this interaction seems to be weak. Interacts with host PACS2. Interacts with host LCK and MAPK3; these interactions inhibit the kinase activity of the latter. Interacts with host ATP6V1H; this interaction may play a role in CD4 endocytosis. Associates with the CD4-Nef-AP2 complex; this complex is required for CD4 internalization. Interacts with host AP2 subunit alpha and AP2 subunit sigma2. Interacts with TCR-zeta chain; this interaction up-regulates the Fas ligand (FasL) surface expression. Interacts with host HCK, LYN, and SRC; these interactions activate the Src family kinases. Interacts with MAP3K5; this interaction inhibits the Fas and TNFR-mediated death signals. Interacts with beta-COP and PTE1. Interacts with human RACK1; this increases Nef phosphorylation by PKC. Interacts with TP53; this interaction decreases the half-life of TP53, protecting the infected cell against p53-mediated apoptosis. The virion-associated Nef proteins are cleaved by the viral protease to release the soluble C-terminal core protein. Nef is probably cleaved concomitantly with viral structural proteins on maturation of virus particles. In terms of processing, myristoylated. Post-translationally, phosphorylated on serine residues, probably by host PKCdelta and theta.

Its subcellular location is the host cell membrane. The protein localises to the virion. The protein resides in the secreted. It is found in the host Golgi apparatus membrane. Factor of infectivity and pathogenicity, required for optimal virus replication. Alters numerous pathways of T-lymphocyte function and down-regulates immunity surface molecules in order to evade host defense and increase viral infectivity. Alters the functionality of other immunity cells, like dendritic cells, monocytes/macrophages and NK cells. In terms of biological role, in infected CD4(+) T-lymphocytes, down-regulates the surface MHC-I, mature MHC-II, CD4, CD28, CCR5 and CXCR4 molecules. Mediates internalization and degradation of host CD4 through the interaction of with the cytoplasmic tail of CD4, the recruitment of AP-2 (clathrin adapter protein complex 2), internalization through clathrin coated pits, and subsequent transport to endosomes and lysosomes for degradation. Diverts host MHC-I molecules to the trans-Golgi network-associated endosomal compartments by an endocytic pathway to finally target them for degradation. MHC-I down-regulation may involve AP-1 (clathrin adapter protein complex 1) or possibly Src family kinase-ZAP70/Syk-PI3K cascade recruited by PACS2. In consequence infected cells are masked for immune recognition by cytotoxic T-lymphocytes. Decreasing the number of immune receptors also prevents reinfection by more HIV particles (superinfection). Down-regulates host SERINC3 and SERINC5 thereby excluding these proteins from the viral particles. Virion infectivity is drastically higher when SERINC3 or SERINC5 are excluded from the viral envelope, because these host antiviral proteins impair the membrane fusion event necessary for subsequent virion penetration. Its function is as follows. Bypasses host T-cell signaling by inducing a transcriptional program nearly identical to that of anti-CD3 cell activation. Interaction with TCR-zeta chain up-regulates the Fas ligand (FasL). Increasing surface FasL molecules and decreasing surface MHC-I molecules on infected CD4(+) cells send attacking cytotoxic CD8+ T-lymphocytes into apoptosis. Functionally, plays a role in optimizing the host cell environment for viral replication without causing cell death by apoptosis. Protects the infected cells from apoptosis in order to keep them alive until the next virus generation is ready to strike. Inhibits the Fas and TNFR-mediated death signals by blocking MAP3K5/ASK1. Decreases the half-life of TP53, protecting the infected cell against p53-mediated apoptosis. Inhibits the apoptotic signals regulated by the Bcl-2 family proteins through the formation of a Nef/PI3-kinase/PAK2 complex that leads to activation of PAK2 and induces phosphorylation of host BAD. Extracellular Nef protein targets CD4(+) T-lymphocytes for apoptosis by interacting with CXCR4 surface receptors. In Human immunodeficiency virus type 1 group M subtype B (isolate SF162) (HIV-1), this protein is Protein Nef.